The sequence spans 287 residues: Hydroxysteroid 11-beta-dehydrogenase 1-like protein (287 aa).

Positions 1 to 15 are cleaved as a signal peptide; sequence MKVLLLTGLGALFFA. NADP(+) contacts are provided by residues 36–62, 87–88, and 114–116; these read GVSA…TAHT, DM, and NHL. A substrate-binding site is contributed by serine 165. Tyrosine 178 serves as the catalytic Proton acceptor. Residues 178–182 and 211–217 contribute to the NADP(+) site; these read YSAAK and GLRDRAS. An N-linked (GlcNAc...) asparagine glycan is attached at asparagine 280.

The protein belongs to the short-chain dehydrogenases/reductases (SDR) family.

Its subcellular location is the secreted. It carries out the reaction cortisone + NADPH + H(+) = cortisol + NADP(+). Functionally, unidirectional NADP(+)-dependent cortisol dehydrogenase (in vitro). This Bos taurus (Bovine) protein is Hydroxysteroid 11-beta-dehydrogenase 1-like protein (HSD11B1L).